The chain runs to 274 residues: Nitrate import ATP-binding protein NrtD (274 aa).

The 234-residue stretch at 17 to 250 (LHFDCVGKTF…RPREREAVVE (234 aa)) folds into the ABC transporter domain. 53 to 60 (GHSGCGKS) contributes to the ATP binding site.

This sequence belongs to the ABC transporter superfamily. Nitrate/nitrite/cyanate uptake transporter (NitT) (TC 3.A.1.16) family. The complex is composed of two ATP-binding proteins (NrtC and NrtD), two transmembrane proteins (NrtB) and a solute-binding protein (NrtA).

The protein resides in the cell inner membrane. The enzyme catalyses nitrate(out) + ATP + H2O = nitrate(in) + ADP + phosphate + H(+). In terms of biological role, part of the ABC transporter complex NrtABCD involved in nitrate uptake. The complex is probably also involved in nitrite transport. Probably responsible for energy coupling to the transport system. The protein is Nitrate import ATP-binding protein NrtD of Synechococcus elongatus (strain ATCC 33912 / PCC 7942 / FACHB-805) (Anacystis nidulans R2).